A 910-amino-acid polypeptide reads, in one-letter code: Lysine-specific demethylase 7 homolog (910 aa).

The segment covering 1 to 11 has biased composition (polar residues); that stretch reads MDGNDINIQKN. Disordered stretches follow at residues 1–58, 103–162, and 183–212; these read MDGN…HQTP, NKMG…GSEP, and QEEL…DRCG. Residues 25–35 are compositionally biased toward basic and acidic residues; the sequence is QHSDHKNHESA. A compositionally biased stretch (polar residues) spans 43–58; that stretch reads YTASQPALSSTEHQTP. Residues 118–130 are compositionally biased toward basic and acidic residues; that stretch reads PKSEPKIEPHVTD. The segment covering 150-160 has biased composition (polar residues); that stretch reads ESNQNYVSNGS. Residues 200-210 are compositionally biased toward basic and acidic residues; that stretch reads PEQKTPKESDR. The PHD-type zinc finger occupies 208–290; it reads SDRCGGCGKF…KFFCPKCVPH (83 aa). In terms of domain architecture, JmjC spans 441–612; it reads SDNNEMKEIA…MQMRVYHLEN (172 aa). Substrate contacts are provided by residues 505 to 510, tyrosine 518, lysine 525, and histidine 580; that span reads TDFHVD. Positions 508 and 510 each coordinate Fe cation. Fe cation is bound at residue histidine 580. Disordered regions lie at residues 712–790 and 864–910; these read KIQN…PSEV and EAVH…KLKM. The segment covering 748-757 has biased composition (basic residues); sequence YKKKYTKKAK. Residues 758-780 show a composition bias toward basic and acidic residues; the sequence is KDNDDAPKVKKAKKEEVPEEKVP.

It belongs to the JHDM1 histone demethylase family. JHDM1D subfamily. Requires Fe(2+) as cofactor. In terms of tissue distribution, mainly expressed in neurons. Also weakly expressed in some muscle, intestinal and hypodermal cells.

The protein resides in the nucleus. Its activity is regulated as follows. Competitively inhibited by 2-hydroxyglutarate. Functionally, histone demethylase required for nervous system development. Specifically demethylates dimethylated 'Lys-9', 'Lys-23' and 'Lys-27' (H3K9me2, H3K23me2 and H3K27me2, respectively) of histone H3, thereby playing a central role in histone code. Promotes mitochondrial stress-induced longevity. The sequence is that of Lysine-specific demethylase 7 homolog (jmjd-1.2) from Caenorhabditis elegans.